The sequence spans 84 residues: U8-theraphotoxin-Hhn1e (84 aa).

An N-terminal signal peptide occupies residues 1 to 21 (MKVVLLVCLVWMMAMMELVSC). 5 disulfide bridges follow: cysteine 23–cysteine 35, cysteine 29–cysteine 44, cysteine 34–cysteine 67, cysteine 54–cysteine 75, and cysteine 69–cysteine 81.

It belongs to the AVIT (prokineticin) family. In terms of tissue distribution, expressed by the venom gland.

It localises to the secreted. This chain is U8-theraphotoxin-Hhn1e, found in Cyriopagopus hainanus (Chinese bird spider).